Consider the following 453-residue polypeptide: Argininosuccinate lyase (453 aa).

Belongs to the lyase 1 family. Argininosuccinate lyase subfamily.

It localises to the cytoplasm. It carries out the reaction 2-(N(omega)-L-arginino)succinate = fumarate + L-arginine. It functions in the pathway amino-acid biosynthesis; L-arginine biosynthesis; L-arginine from L-ornithine and carbamoyl phosphate: step 3/3. This Shewanella loihica (strain ATCC BAA-1088 / PV-4) protein is Argininosuccinate lyase.